The sequence spans 957 residues: Collagen alpha-1(XXI) chain (957 aa).

A signal peptide spans 1–16; sequence MPGIIYILCSILLIES. The VWFA domain maps to 37–211; sequence DLVFILDGSW…RIREIMKQKL (175 aa). Residues 230-412 enclose the Laminin G-like domain; that stretch reads GFDILLGLGI…LQKLRIYCDP (183 aa). 2 disordered regions span residues 441–788 and 820–935; these read PAPC…GKEQ and CKTQ…DAGI. 8 consecutive Collagen-like domains span residues 448–501, 502–543, 544–591, 592–642, 643–684, 685–741, 742–786, and 825–882; these read PGEK…PRGF, AGLK…DKGD, IGID…EEGK, PGPP…ISGP, EGIS…IPGQ, QGYT…EIGE, HGHR…QQGK, and GSPG…GNKG. Low complexity predominate over residues 483 to 498; sequence TSGSPGIPGSPGVQGP. Positions 535–556 are enriched in basic and acidic residues; sequence MGPKGDKGDIGIDGKKGTKGDK. Low complexity-rich tracts occupy residues 597–616 and 633–649; these read MEGL…DGAN and PTGT…SGPQ. The segment covering 733 to 744 has biased composition (basic and acidic residues); it reads KGEKGEIGEHGH. Residues 775-786 are compositionally biased toward low complexity; the sequence is QGLPGPKGQQGK.

This sequence belongs to the fibril-associated collagens with interrupted helices (FACIT) family.

It localises to the secreted. Its subcellular location is the extracellular space. It is found in the extracellular matrix. The protein resides in the cytoplasm. In Xenopus laevis (African clawed frog), this protein is Collagen alpha-1(XXI) chain (col21a1).